The primary structure comprises 240 residues: LOB domain-containing protein 39 (240 aa).

The region spanning 1–107 is the LOB domain; that stretch reads MSCNGCRVLR…VETVLRGGTL (107 aa). The interval 200 to 233 is disordered; the sequence is GDRPGSPSEESVTTSCWENGMRGDNKQKRNKGEK. Residues 207–216 are compositionally biased toward polar residues; it reads SEESVTTSCW.

The protein belongs to the LOB domain-containing protein family. In terms of tissue distribution, expressed in young shoots, roots, stems, leaves and flowers.

The chain is LOB domain-containing protein 39 (LBD39) from Arabidopsis thaliana (Mouse-ear cress).